A 530-amino-acid chain; its full sequence is Ankyrin repeat domain-containing protein 53 (530 aa).

Over residues 1-15 the composition is skewed to low complexity; sequence MASAGSTARRAGSGS. A disordered region spans residues 1 to 99; sequence MASAGSTARR…PSPSKESDQT (99 aa). Residues 32–41 are compositionally biased toward polar residues; the sequence is PSGSMQQANK. ANK repeat units lie at residues 139–169, 173–206, and 210–239; these read KGFTAIHFAAQWGKLACLQVLVEEYKFPVDL, NSQTPLHLVIHRDNTTVALPCIYYLLEKGADLNA, and NGSTPLHLAARDGLLDCVKVLVQSGANVHA. Disordered stretches follow at residues 323 to 360 and 383 to 402; these read GHSLVSNTKQARATALSKTPEQRESQRSRSFHPSVDAR and PTMWNVSNNPARPPTTQISH. Composition is skewed to polar residues over residues 326 to 341 and 386 to 402; these read LVSNTKQARATALSKT and WNVSNNPARPPTTQISH.

In terms of assembly, interacts with PSRC1; recruited by PSRC1 to the spindle during mitosis. Phosphorylated during mitosis.

It is found in the cytoplasm. The protein localises to the cytoskeleton. It localises to the spindle. The protein resides in the spindle pole. Functionally, required for normal progression through mitosis. Involved in chromosome alignment and cytokinesis via regulation of microtubules polymerization. This chain is Ankyrin repeat domain-containing protein 53 (ANKRD53), found in Homo sapiens (Human).